A 1620-amino-acid polypeptide reads, in one-letter code: Probable serine/threonine-protein kinase gdt4 (1620 aa).

The first 19 residues, 1–19 (MKLEQRIFFLICLVINSFS), serve as a signal peptide directing secretion. Over 20-891 (NCSLLVAPDG…EVIGINEQLN (872 aa)) the chain is Extracellular. Residues 892–912 (ILAIVLPITISLFAAASILAG) form a helical membrane-spanning segment. At 913–1620 (YLVIKKYKKP…AKRNKKNQNQ (708 aa)) the chain is on the cytoplasmic side. Residues 1349–1604 (IVLEKYLSEG…TLIDLLEKLL (256 aa)) form the Protein kinase domain. Residues 1355–1363 (LSEGSFGVV) and Lys-1376 each bind ATP. Catalysis depends on Asp-1466, which acts as the Proton acceptor.

In the N-terminal section; belongs to the GDT family. The protein in the C-terminal section; belongs to the protein kinase superfamily. TKL Ser/Thr protein kinase family.

It is found in the membrane. It carries out the reaction L-seryl-[protein] + ATP = O-phospho-L-seryl-[protein] + ADP + H(+). The catalysed reaction is L-threonyl-[protein] + ATP = O-phospho-L-threonyl-[protein] + ADP + H(+). The polypeptide is Probable serine/threonine-protein kinase gdt4 (gdt4) (Dictyostelium discoideum (Social amoeba)).